The chain runs to 65 residues: Adrenergic toxin rho-elapitoxin-Dp1a (65 aa).

4 cysteine pairs are disulfide-bonded: C3–C24, C17–C42, C46–C57, and C58–C63.

Belongs to the three-finger toxin family. Short-chain subfamily. Aminergic toxin sub-subfamily. Expressed by the venom gland.

The protein localises to the secreted. In terms of biological role, this toxin shows activities on different G-protein coupled receptors. It is highly potent on various alpha-adrenoceptors (ADRA) (subnanomolar affinity for ADRA1A). Order of potency is the following: ADRA1A &gt; ADRA1B &gt; ADRA1D &gt; ADRA2C. It is also found to reversibly bind to muscarinic acetylcholine receptors (CHRM), but the affinity is much weaker (CHRM1 and CHRM2, Ki&gt;1 uM; CHRM3, Ki=140 nM; CHRM4, Ki=120 nM; CHRM5, Ki=350 nM). The sequence is that of Adrenergic toxin rho-elapitoxin-Dp1a from Dendroaspis polylepis polylepis (Black mamba).